Reading from the N-terminus, the 438-residue chain is Xylose isomerase (438 aa).

Active-site residues include His102 and Asp105. Residues Glu233, Glu269, His272, Asp297, Asp308, Asp310, and Asp340 each coordinate Mg(2+).

This sequence belongs to the xylose isomerase family. Homotetramer. Mg(2+) is required as a cofactor.

It is found in the cytoplasm. The enzyme catalyses alpha-D-xylose = alpha-D-xylulofuranose. This chain is Xylose isomerase, found in Solibacter usitatus (strain Ellin6076).